We begin with the raw amino-acid sequence, 431 residues long: MANIINVIGREIMDSRGNPTVEAEVHLAGGFIGMAAAPSGASTGSREALELRDGDKSRYLGKGVLNAVANINGVIKAALMGKDAAAQAELDQIMIDLDGTENKDKLGANAILAVSLAAAKAAAMSKGIPLYAHIAELNGTPGVYSMPVPMMNIINGGEHADNNVDIQEFMVQPVGAKNFREALRMGAEIFHSLKKVLQSKGLSTAVGDEGGFAPNLASNAEALAVIKVAVEEAGYKLGTDVTLALDCAATEFYKDGKYDLAGEGKVFDSNGFSDFLKSLADQYPIVSIEDGLDESDWEGWAYQTKIMGDKIQLVGDDLFVTNTKILTRGIENNIANSILIKFNQIGSLTETLAAIRMAKEAGYTAVISHRSGETEDSTIADLAVGTAAGQIKTGSLCRSDRVAKYNQLLRIEEQLGEKAPYRGLKEIKGQA.

Glutamine 167 provides a ligand contact to (2R)-2-phosphoglycerate. Catalysis depends on glutamate 209, which acts as the Proton donor. Aspartate 246, glutamate 289, and aspartate 316 together coordinate Mg(2+). The (2R)-2-phosphoglycerate site is built by lysine 341, arginine 370, serine 371, and lysine 392. Catalysis depends on lysine 341, which acts as the Proton acceptor.

It belongs to the enolase family. In terms of assembly, component of the RNA degradosome, a multiprotein complex involved in RNA processing and mRNA degradation. It depends on Mg(2+) as a cofactor.

Its subcellular location is the cytoplasm. The protein localises to the secreted. It is found in the cell surface. It carries out the reaction (2R)-2-phosphoglycerate = phosphoenolpyruvate + H2O. Its pathway is carbohydrate degradation; glycolysis; pyruvate from D-glyceraldehyde 3-phosphate: step 4/5. Functionally, catalyzes the reversible conversion of 2-phosphoglycerate (2-PG) into phosphoenolpyruvate (PEP). It is essential for the degradation of carbohydrates via glycolysis. This chain is Enolase, found in Shewanella denitrificans (strain OS217 / ATCC BAA-1090 / DSM 15013).